The sequence spans 156 residues: Ribonuclease H (156 aa).

An RNase H type-1 domain is found at 3-144 (ELKLIHIFTD…CDVLARTAAE (142 aa)). Mg(2+) contacts are provided by Asp-12, Glu-50, Asp-72, and Asp-136.

This sequence belongs to the RNase H family. In terms of assembly, monomer. It depends on Mg(2+) as a cofactor.

Its subcellular location is the cytoplasm. The enzyme catalyses Endonucleolytic cleavage to 5'-phosphomonoester.. In terms of biological role, endonuclease that specifically degrades the RNA of RNA-DNA hybrids. The protein is Ribonuclease H of Shewanella baltica (strain OS223).